Consider the following 78-residue polypeptide: Esculentin-2PLa (78 aa).

The signal sequence occupies residues 1–22 (MFTTKKSMLLLFFLGTISLSLC). Positions 23–39 (EEERGADEEEGDGEKLM) are excised as a propeptide. A disulfide bridge links C72 with C78.

As to expression, expressed by the skin glands.

It is found in the secreted. Functionally, antimicrobial activity against the Gram-negative bacterium E.coli, the Gram-positive bacterium S.aureus and the yeast C.albicans. The polypeptide is Esculentin-2PLa (Lithobates palustris (Pickerel frog)).